The primary structure comprises 685 residues: Threonine--tRNA ligase (685 aa).

The segment at 1–28 (MTSPAPEHSAAPLRVPAGTTAGTAVREA) is disordered. The region spanning 1–65 (MTSPAPEHSA…EVDVDVEPVA (65 aa)) is the TGS domain. A catalytic region spans residues 262 to 568 (DHRKLGTELD…LTEHYAGAFP (307 aa)). 3 residues coordinate Zn(2+): Cys367, His418, and His545.

The protein belongs to the class-II aminoacyl-tRNA synthetase family. Homodimer. Zn(2+) is required as a cofactor.

The protein localises to the cytoplasm. It catalyses the reaction tRNA(Thr) + L-threonine + ATP = L-threonyl-tRNA(Thr) + AMP + diphosphate + H(+). Catalyzes the attachment of threonine to tRNA(Thr) in a two-step reaction: L-threonine is first activated by ATP to form Thr-AMP and then transferred to the acceptor end of tRNA(Thr). Also edits incorrectly charged L-seryl-tRNA(Thr). In Rhodococcus erythropolis (strain PR4 / NBRC 100887), this protein is Threonine--tRNA ligase.